The primary structure comprises 831 residues: Glucan 1,3-beta-glucosidase D (831 aa).

Residues 1 to 21 (MPSQSRSRDRYGRDSDRDRSR) are compositionally biased toward basic and acidic residues. 2 disordered regions span residues 1–246 (MPSQ…RGQS) and 261–288 (APDM…SDGS). Topologically, residues 1–300 (MPSQSRSRDR…LTPFWKRKKW (300 aa)) are cytoplasmic. The segment covering 32–41 (EDDDDDDDFD) has biased composition (acidic residues). Composition is skewed to basic and acidic residues over residues 42-70 (DNPR…HDDY), 78-94 (EPRR…ERAR), and 151-177 (DAAR…HKST). Low complexity predominate over residues 178-195 (DSSNSSAGLLNANALAKL). Basic and acidic residues-rich tracts occupy residues 197–216 (AQHE…EAKA) and 275–286 (PPRERRWEKDSD). The chain crosses the membrane as a helical; Signal-anchor for type II membrane protein span at residues 301–321 (WWIGAIVLVIVVIIIVVAVVV). Topologically, residues 322 to 831 (SNNKKSDSDS…PSFGNLPEYY (510 aa)) are extracellular. Residues 325–360 (KKSDSDSDSDSNSGSSDSWGGDKSSLNGLDHDSIPK) are disordered. Residues 334–350 (DSNSGSSDSWGGDKSSL) show a composition bias toward low complexity. Asn-379, Asn-396, and Asn-547 each carry an N-linked (GlcNAc...) asparagine glycan. Residue Glu-598 is the Proton donor of the active site. 4 N-linked (GlcNAc...) asparagine glycosylation sites follow: Asn-611, Asn-637, Asn-670, and Asn-690. Glu-703 acts as the Nucleophile in catalysis.

The protein belongs to the glycosyl hydrolase 5 (cellulase A) family.

Its subcellular location is the cell membrane. The catalysed reaction is Successive hydrolysis of beta-D-glucose units from the non-reducing ends of (1-&gt;3)-beta-D-glucans, releasing alpha-glucose.. In terms of biological role, glucosidase involved in the degradation of cellulosic biomass. Active on lichenan. In Emericella nidulans (strain FGSC A4 / ATCC 38163 / CBS 112.46 / NRRL 194 / M139) (Aspergillus nidulans), this protein is Glucan 1,3-beta-glucosidase D (exgD).